Reading from the N-terminus, the 210-residue chain is Thymidylate kinase (210 aa).

10-17 (GPEGAGKS) serves as a coordination point for ATP.

It belongs to the thymidylate kinase family.

The catalysed reaction is dTMP + ATP = dTDP + ADP. Phosphorylation of dTMP to form dTDP in both de novo and salvage pathways of dTTP synthesis. This chain is Thymidylate kinase, found in Pseudomonas paraeruginosa (strain DSM 24068 / PA7) (Pseudomonas aeruginosa (strain PA7)).